A 757-amino-acid chain; its full sequence is Dynamin-related protein DNM1 (757 aa).

Positions 25–333 (TLDLPILAVV…LLSHIRDKLP (309 aa)) constitute a Dynamin-type G domain. Residues 35 to 42 (GSQSSGKS) are G1 motif. 35–42 (GSQSSGKS) provides a ligand contact to GTP. Residues 61–63 (VTR) form a G2 motif region. A G3 motif region spans residues 175 to 178 (DLPG). Residues 175-179 (DLPGI) and 244-247 (TKLD) each bind GTP. Positions 244–247 (TKLD) are G4 motif. The interval 274–277 (VNRS) is G5 motif. The interval 557–597 (SKLSQQENGQTNGINGTSSISSNIDQDSAKNSDYDDDGIDA) is disordered. Low complexity predominate over residues 567–580 (TNGINGTSSISSNI). At serine 629 the chain carries Phosphoserine. Residues 670–757 (CELIKRLIVS…KAATLISNIL (88 aa)) form the GED domain.

It belongs to the TRAFAC class dynamin-like GTPase superfamily. Dynamin/Fzo/YdjA family. Interacts with FIS1 and MDV1.

The protein resides in the mitochondrion outer membrane. The enzyme catalyses GTP + H2O = GDP + phosphate + H(+). Its function is as follows. Microtubule-associated force-producing protein that participates mitochondrial fission. Fission of mitochondria occurs in many cell types and constitutes an important step in mitochondria morphology, which is balanced between fusion and fission. Functions antagonistically with FZO1. This Saccharomyces cerevisiae (strain ATCC 204508 / S288c) (Baker's yeast) protein is Dynamin-related protein DNM1 (DNM1).